We begin with the raw amino-acid sequence, 619 residues long: DNA mismatch repair protein MutL (619 aa).

Residues 364–375 (EPASAREPAAPR) show a composition bias toward low complexity. The segment at 364 to 399 (EPASAREPAAPRYSTSSGATGGRQPAASWPHAQPGY) is disordered.

This sequence belongs to the DNA mismatch repair MutL/HexB family.

This protein is involved in the repair of mismatches in DNA. It is required for dam-dependent methyl-directed DNA mismatch repair. May act as a 'molecular matchmaker', a protein that promotes the formation of a stable complex between two or more DNA-binding proteins in an ATP-dependent manner without itself being part of a final effector complex. This Citrobacter koseri (strain ATCC BAA-895 / CDC 4225-83 / SGSC4696) protein is DNA mismatch repair protein MutL.